Here is a 375-residue protein sequence, read N- to C-terminus: Trichodiene synthase (375 aa).

It belongs to the trichodiene synthase family.

It catalyses the reaction (2E,6E)-farnesyl diphosphate = trichodiene + diphosphate. Its pathway is sesquiterpene biosynthesis; trichothecene biosynthesis. Functionally, TS is a member of the terpene cyclase group of enzymes. It catalyzes the isomerization and cyclization of farnesyl pyro-phosphate to form trichodiene, the first cyclic intermediate in the biosynthetic pathway for trichothecenes. It serves to branch trichothecene biosynthesis from the isoprenoid pathway. The chain is Trichodiene synthase (TRI5) from Fusarium boothii.